The primary structure comprises 335 residues: Ferredoxin--NADP reductase (335 aa).

FAD is bound by residues aspartate 34, glutamine 42, tyrosine 47, alanine 87, phenylalanine 121, aspartate 287, and threonine 328.

Belongs to the ferredoxin--NADP reductase type 2 family. As to quaternary structure, homodimer. FAD serves as cofactor.

It catalyses the reaction 2 reduced [2Fe-2S]-[ferredoxin] + NADP(+) + H(+) = 2 oxidized [2Fe-2S]-[ferredoxin] + NADPH. The protein is Ferredoxin--NADP reductase of Rickettsia felis (strain ATCC VR-1525 / URRWXCal2) (Rickettsia azadi).